The following is a 346-amino-acid chain: Archaeosine synthase subunit beta (346 aa).

A Radical SAM core domain is found at 36–276 (GVQTKTLTVI…LRQAKAAHPE (241 aa)). Cys51, Cys59, and Cys62 together coordinate [4Fe-4S] cluster.

It belongs to the radical SAM superfamily. RaSEA family. As to quaternary structure, forms a robust complex with the archaeosine synthase alpha subunit ArcS. This complex likely consists of an alpha(2)beta(2) heterotetrameric structure. It depends on [4Fe-4S] cluster as a cofactor.

The enzyme catalyses 7-N-[(5S)-5-amino-5-carboxypentyl]formamidino-7-deazaguanosine(15) in tRNA + S-adenosyl-L-methionine = archaeosine(15) in tRNA + L-1-piperideine-6-carboxylate + 5'-deoxyadenosine + L-methionine + 2 H(+). It participates in tRNA modification; archaeosine-tRNA biosynthesis. Functionally, radical SAM enzyme involved in the synthesis of archaeosine, a modified nucleoside present in the dihydrouridine loop (D-loop) of archaeal tRNAs. Catalyzes the cleavage of the C(epsilon)-N bond of the lysine moiety of q0kN15-tRNA, leading to the formation of archaeosine at position 15 in tRNAs. The chain is Archaeosine synthase subunit beta from Methanosarcina acetivorans (strain ATCC 35395 / DSM 2834 / JCM 12185 / C2A).